Reading from the N-terminus, the 358-residue chain is Serine/threonine-protein phosphatase 2A activator 2 (358 aa).

As to quaternary structure, interacts with the phosphatase PP2A catalytic subunits PPH21 and PPH22. Forms a ternary complex with PPH21-TAP42.

It localises to the cytoplasm. It catalyses the reaction [protein]-peptidylproline (omega=180) = [protein]-peptidylproline (omega=0). Its function is as follows. PPIases accelerate the folding of proteins. It catalyzes the cis-trans isomerization of proline imidic peptide bonds in oligopeptides. Acts as a regulatory subunit for TAP42-associated PP2A-like phosphatases modulating their activity or substrate specificity, probably by inducing a conformational change in the catalytic subunit, a direct target of the PPIase. Can reactivate inactive phosphatase PP2A-phosphatase methylesterase complexes (PP2Ai) in presence of ATP and Mg(2+) by dissociating the inactive form from the complex. Acts also inhibitory at high concentrations. Involved in the regulation of cell cycle progression, mitotic spindle formation and bud morphogenesis. The chain is Serine/threonine-protein phosphatase 2A activator 2 (RRD2) from Saccharomyces cerevisiae (strain ATCC 204508 / S288c) (Baker's yeast).